Consider the following 138-residue polypeptide: Large ribosomal subunit protein uL16 (138 aa).

Basic residues predominate over residues Met-1–Gln-13. The segment at Met-1–Thr-22 is disordered.

This sequence belongs to the universal ribosomal protein uL16 family. In terms of assembly, part of the 50S ribosomal subunit.

Binds 23S rRNA and is also seen to make contacts with the A and possibly P site tRNAs. This Bordetella petrii (strain ATCC BAA-461 / DSM 12804 / CCUG 43448) protein is Large ribosomal subunit protein uL16.